Here is a 263-residue protein sequence, read N- to C-terminus: Type III pantothenate kinase (263 aa).

14–21 (DIGNTSVN) serves as a coordination point for ATP. 115–118 (GADR) is a binding site for substrate. D117 serves as the catalytic Proton acceptor. D137 provides a ligand contact to K(+). T140 is a binding site for ATP. Residue T192 participates in substrate binding.

This sequence belongs to the type III pantothenate kinase family. Homodimer. NH4(+) is required as a cofactor. Requires K(+) as cofactor.

The protein localises to the cytoplasm. It carries out the reaction (R)-pantothenate + ATP = (R)-4'-phosphopantothenate + ADP + H(+). The protein operates within cofactor biosynthesis; coenzyme A biosynthesis; CoA from (R)-pantothenate: step 1/5. In terms of biological role, catalyzes the phosphorylation of pantothenate (Pan), the first step in CoA biosynthesis. The polypeptide is Type III pantothenate kinase (Dehalococcoides mccartyi (strain ATCC BAA-2100 / JCM 16839 / KCTC 5957 / BAV1)).